The sequence spans 296 residues: Phosphoribosylaminoimidazole-succinocarboxamide synthase (296 aa).

Belongs to the SAICAR synthetase family.

The catalysed reaction is 5-amino-1-(5-phospho-D-ribosyl)imidazole-4-carboxylate + L-aspartate + ATP = (2S)-2-[5-amino-1-(5-phospho-beta-D-ribosyl)imidazole-4-carboxamido]succinate + ADP + phosphate + 2 H(+). It functions in the pathway purine metabolism; IMP biosynthesis via de novo pathway; 5-amino-1-(5-phospho-D-ribosyl)imidazole-4-carboxamide from 5-amino-1-(5-phospho-D-ribosyl)imidazole-4-carboxylate: step 1/2. The sequence is that of Phosphoribosylaminoimidazole-succinocarboxamide synthase from Lachnospira eligens (strain ATCC 27750 / DSM 3376 / VPI C15-48 / C15-B4) (Eubacterium eligens).